Consider the following 332-residue polypeptide: Putative peptide import ATP-binding protein BMEII0206 (332 aa).

In terms of domain architecture, ABC transporter spans 11–261 (LEVSNLSVDF…PLHPYTEGLL (251 aa)). ATP is bound at residue 47–54 (GESGSGKS).

The protein belongs to the ABC transporter superfamily. The complex is composed of two ATP-binding proteins (BMEII0205 and BMEII0206), two transmembrane proteins (BMEII0207/BMEII0208 and BMEII0209) and a solute-binding protein (BMEII0210).

The protein resides in the cell inner membrane. Probably part of an ABC transporter complex that could be involved in peptide import. Probably responsible for energy coupling to the transport system. The chain is Putative peptide import ATP-binding protein BMEII0206 from Brucella melitensis biotype 1 (strain ATCC 23456 / CCUG 17765 / NCTC 10094 / 16M).